Here is a 72-residue protein sequence, read N- to C-terminus: Translation initiation factor IF-1 (72 aa).

Residues 1-72 (MAKEDNFELE…SKGRITYRAR (72 aa)) form the S1-like domain.

The protein belongs to the IF-1 family. As to quaternary structure, component of the 30S ribosomal translation pre-initiation complex which assembles on the 30S ribosome in the order IF-2 and IF-3, IF-1 and N-formylmethionyl-tRNA(fMet); mRNA recruitment can occur at any time during PIC assembly.

It localises to the cytoplasm. Its function is as follows. One of the essential components for the initiation of protein synthesis. Stabilizes the binding of IF-2 and IF-3 on the 30S subunit to which N-formylmethionyl-tRNA(fMet) subsequently binds. Helps modulate mRNA selection, yielding the 30S pre-initiation complex (PIC). Upon addition of the 50S ribosomal subunit IF-1, IF-2 and IF-3 are released leaving the mature 70S translation initiation complex. In Saccharophagus degradans (strain 2-40 / ATCC 43961 / DSM 17024), this protein is Translation initiation factor IF-1.